The chain runs to 247 residues: MTILFLTMVISYFGCMKAAPMKEANVRGQGSLAYPGVRTHGTLESVNGPKAGSRGLTSLADTFEHVIEELLDEDQKVRPSEENNKDADLYTSRVMLSSQVPLEPPLLFLLEEYKNYLDAANMSMRVRRHSDPARRGELSVCDSISEWVTAADKKTAVDMSGGTVTVLEKVPVSKGQLKQYFYETKCNPMGYTKEGCRGIDKRHWNSQCRTTQSYVRALTMDSKKRIGWRFIRIDTSCVCTLTIKRGR.

Residues 1–18 (MTILFLTMVISYFGCMKA) form the signal peptide. A propeptide spanning residues 19-128 (APMKEANVRG…AANMSMRVRR (110 aa)) is cleaved from the precursor. A glycan (N-linked (GlcNAc...) asparagine) is linked at Asn-121. Cystine bridges form between Cys-141/Cys-208, Cys-186/Cys-237, and Cys-196/Cys-239.

Belongs to the NGF-beta family. Monomers and homodimers. Binds to NTRK2/TRKB. Can form heterodimers with other neurotrophin family members, such as NTF3 and NTF4 (in vitro), but the physiological relevance of this is not clear. BDNF precursor form: interacts with the heterodimer formed by NGFR and SORCS2. Mature BDNF has much lower affinity for the heterodimer formed by NGFR and SORCS2. Post-translationally, N-glycosylated and glycosulfated, contrary to mature BDNF. Mature BDNF is produced by proteolytic removal of the propeptide, catalyzed by a FURIN family member. In addition, the precursor form is proteolytically cleaved within the propeptide, but this is not an obligatory intermediate for the production of mature BDNF. Can be converted into mature BDNF by plasmin (PLG).

The protein resides in the secreted. In terms of biological role, important signaling molecule that activates signaling cascades downstream of NTRK2. During development, promotes the survival and differentiation of selected neuronal populations of the peripheral and central nervous systems. Participates in axonal growth, pathfinding and in the modulation of dendritic growth and morphology. Major regulator of synaptic transmission and plasticity at adult synapses in many regions of the CNS. The versatility of BDNF is emphasized by its contribution to a range of adaptive neuronal responses including long-term potentiation (LTP), long-term depression (LTD), certain forms of short-term synaptic plasticity, as well as homeostatic regulation of intrinsic neuronal excitability. Important signaling molecule that activates signaling cascades downstream of NTRK2. Activates signaling cascades via the heterodimeric receptor formed by NGFR and SORCS2. Signaling via NGFR and SORCS2 plays a role in synaptic plasticity and long-term depression (LTD). Binding to NGFR and SORCS2 promotes neuronal apoptosis. Promotes neuronal growth cone collapse. The polypeptide is Neurotrophic factor BDNF precursor form (BDNF) (Helarctos malayanus (Malayan sun bear)).